The sequence spans 95 residues: Enhancer of yellow 2 transcription factor (95 aa).

This sequence belongs to the ENY2 family. In terms of assembly, component of the nuclear pore complex (NPC)-associated AMEX complex (anchoring and mRNA export complex), composed of at least e(y)2 and xmas-2. Component of the SAGA transcription coactivator-HAT complexes, at least composed of Ada2b, e(y)2, Pcaf/Gcn5, Taf10 and Nipped-A/Trrap. Within the SAGA complex, e(y)2, Sgf11, and not/nonstop form an additional subcomplex of SAGA called the DUB module (deubiquitination module). Component of the THO complex, composed of at least e(y)2, HPR1, THO2, THOC5, THOC6 and THOC7. Interacts with e(y)1. Interacts with su(Hw) (via zinc fingers). Interacts with xmas-2; required for localization to the nuclear periphery. Interacts with the nuclear pore complex (NPC).

It localises to the nucleus. The protein localises to the nucleoplasm. It is found in the cytoplasm. Functionally, involved in mRNA export coupled transcription activation by association with both the AMEX and the SAGA complexes. The SAGA complex is a multiprotein complex that activates transcription by remodeling chromatin and mediating histone acetylation and deubiquitination. Within the SAGA complex, participates in a subcomplex that specifically deubiquitinates histone H2B. The SAGA complex is recruited to specific gene promoters by activators, where it is required for transcription. Required for nuclear receptor-mediated transactivation. Involved in transcription elongation by recruiting the THO complex onto nascent mRNA. The AMEX complex functions in docking export-competent ribonucleoprotein particles (mRNPs) to the nuclear entrance of the nuclear pore complex (nuclear basket). AMEX participates in mRNA export and accurate chromatin positioning in the nucleus by tethering genes to the nuclear periphery. This Drosophila virilis (Fruit fly) protein is Enhancer of yellow 2 transcription factor.